The primary structure comprises 69 residues: Light-harvesting polypeptide B-800/860 alpha chain (69 aa).

Residues 1–14 (MTNGKIWLVVKPTV) lie on the Cytoplasmic side of the membrane. A helical membrane pass occupies residues 15-35 (GLPIGMLFAALLAVLIHGLLF). Histidine 31 serves as a coordination point for a bacteriochlorophyll. Over 36–69 (VDGRLKSWWSEFPVAKPAVVSVQAAPAPVAAEVK) the chain is Periplasmic.

It belongs to the antenna complex alpha subunit family. The core complex is formed by different alpha and beta chains, binding bacteriochlorophyll molecules, and arranged most probably in tetrameric structures disposed around the reaction center. The non-pigmented gamma chains may constitute additional components.

It localises to the cell inner membrane. In terms of biological role, antenna complexes are light-harvesting systems, which transfer the excitation energy to the reaction centers. The protein is Light-harvesting polypeptide B-800/860 alpha chain of Rhodocyclus tenuis (Rhodospirillum tenue).